The following is a 52-amino-acid chain: Conotoxin Cal9.2b (52 aa).

Residues K1 to L6 constitute a propeptide that is removed on maturation. Cystine bridges form between C14–C31, C19–C41, and C21–C46.

In terms of tissue distribution, expressed by the venom duct.

The protein resides in the secreted. Probable neurotoxin with unknown target. Possibly targets ion channels. The sequence is that of Conotoxin Cal9.2b from Californiconus californicus (California cone).